The sequence spans 224 residues: Large ribosomal subunit protein uL3 (224 aa).

Residue Gln159 is modified to N5-methylglutamine.

It belongs to the universal ribosomal protein uL3 family. Part of the 50S ribosomal subunit. Forms a cluster with proteins L14 and L19. Methylated by PrmB.

One of the primary rRNA binding proteins, it binds directly near the 3'-end of the 23S rRNA, where it nucleates assembly of the 50S subunit. The polypeptide is Large ribosomal subunit protein uL3 (Janthinobacterium sp. (strain Marseille) (Minibacterium massiliensis)).